The primary structure comprises 698 residues: Quillaic acid 3-O-glycosyltransferase CSL1 (698 aa).

A helical transmembrane segment spans residues 14–34 (ALLSRLHILFHSALVASVFYY). An N-linked (GlcNAc...) asparagine glycan is attached at Asn38. Residues 42-62 (GPAWALMTFAELTLAFIWALT) traverse the membrane as a helical segment. The UDP-alpha-D-glucose site is built by Lys99 and Glu100. Asp129 is an active-site residue. Asn317 carries N-linked (GlcNAc...) asparagine glycosylation. Residue Ser436 is part of the active site. Helical transmembrane passes span 478 to 498 (WTSGLIGVGISKFSPFTYAMS), 508 to 528 (YAYFAFSGLFAVFFLIYGVVL), 546 to 566 (WLLAFAGVFISSLLQHLYEVL), 581 to 601 (IWIIKSITACLFGLLDAMLNK), 636 to 656 (MFMVPLMILVVFNLVSFFGGL), and 669 to 689 (FAQLFLSLFILALSYPIMEEI).

Belongs to the glycosyltransferase 2 family. Plant cellulose synthase-like G subfamily. Mainly expressed in flowers and flower buds and, to a lesser extent, in leaves, stems and roots.

The protein localises to the golgi apparatus membrane. It participates in secondary metabolite biosynthesis; terpenoid biosynthesis. Its function is as follows. Component of the oleanane-type triterpene saponins (e.g. saponarioside A and saponarioside B) biosynthetic pathway, leading to the production of natural products with detergent properties used as traditional sources of soap. Glycosyltransferase that mediates the conversion of quillaic acid (QA) to QA-mono via the initiation of the C-3 sugar chain. The protein is Quillaic acid 3-O-glycosyltransferase CSL1 of Saponaria officinalis (Common soapwort).